A 442-amino-acid chain; its full sequence is tRNA modification GTPase MnmE (442 aa).

(6S)-5-formyl-5,6,7,8-tetrahydrofolate is bound by residues arginine 22, glutamate 79, and lysine 119. Residues glycine 216 to alanine 366 form the TrmE-type G domain. Asparagine 226 contributes to the K(+) binding site. GTP is bound by residues asparagine 226–serine 231, serine 245–threonine 251, and aspartate 270–glycine 273. Mg(2+) is bound at residue serine 230. Serine 245, isoleucine 247, and threonine 250 together coordinate K(+). Threonine 251 contributes to the Mg(2+) binding site. Lysine 442 serves as a coordination point for (6S)-5-formyl-5,6,7,8-tetrahydrofolate.

Belongs to the TRAFAC class TrmE-Era-EngA-EngB-Septin-like GTPase superfamily. TrmE GTPase family. Homodimer. Heterotetramer of two MnmE and two MnmG subunits. It depends on K(+) as a cofactor.

It localises to the cytoplasm. Exhibits a very high intrinsic GTPase hydrolysis rate. Involved in the addition of a carboxymethylaminomethyl (cmnm) group at the wobble position (U34) of certain tRNAs, forming tRNA-cmnm(5)s(2)U34. The sequence is that of tRNA modification GTPase MnmE from Mesomycoplasma hyopneumoniae (strain 7448) (Mycoplasma hyopneumoniae).